Reading from the N-terminus, the 398-residue chain is GTP cyclohydrolase-2 (398 aa).

The interval methionine 1–glutamate 172 is unknown. The interval tyrosine 173–alanine 398 is GTP cyclohydrolase II. Residue arginine 220–serine 224 coordinates GTP. Zn(2+) is bound by residues cysteine 225, cysteine 236, and cysteine 238. GTP-binding positions include glutamine 241, glutamate 263–arginine 265, and threonine 285. The Proton acceptor role is filled by aspartate 297. The Nucleophile role is filled by arginine 299. GTP is bound by residues serine 320 and lysine 325. Positions glutamine 375 to alanine 398 are disordered.

It in the C-terminal section; belongs to the GTP cyclohydrolase II family. Zn(2+) is required as a cofactor.

The enzyme catalyses GTP + 4 H2O = 2,5-diamino-6-hydroxy-4-(5-phosphoribosylamino)-pyrimidine + formate + 2 phosphate + 3 H(+). Its pathway is cofactor biosynthesis; riboflavin biosynthesis; 5-amino-6-(D-ribitylamino)uracil from GTP: step 1/4. Functionally, catalyzes the conversion of GTP to 2,5-diamino-6-ribosylamino-4(3H)-pyrimidinone 5'-phosphate (DARP), formate and pyrophosphate. This chain is GTP cyclohydrolase-2 (ribA), found in Xylella fastidiosa (strain 9a5c).